Here is a 525-residue protein sequence, read N- to C-terminus: Probable alpha-galactosidase A (525 aa).

Positions 1 to 17 are cleaved as a signal peptide; it reads MHPSMTLLAILPPLVRA. A disulfide bond links cysteine 40 and cysteine 72. Asparagine 43, asparagine 81, and asparagine 117 each carry an N-linked (GlcNAc...) asparagine glycan. A disulfide bridge connects residues cysteine 120 and cysteine 150. The active-site Nucleophile is aspartate 148. A glycan (N-linked (GlcNAc...) asparagine) is linked at asparagine 197. Aspartate 206 functions as the Proton donor in the catalytic mechanism. One can recognise a Ricin B-type lectin domain in the interval 402 to 525; sequence PPDCPMVIPT…GLPSGVDIEA (124 aa). 2 cysteine pairs are disulfide-bonded: cysteine 422–cysteine 434 and cysteine 459–cysteine 472.

Belongs to the glycosyl hydrolase 27 family.

It localises to the secreted. It catalyses the reaction Hydrolysis of terminal, non-reducing alpha-D-galactose residues in alpha-D-galactosides, including galactose oligosaccharides, galactomannans and galactolipids.. Hydrolyzes a variety of simple alpha-D-galactoside as well as more complex molecules such as oligosaccharides and polysaccharides. The chain is Probable alpha-galactosidase A (aglA) from Aspergillus clavatus (strain ATCC 1007 / CBS 513.65 / DSM 816 / NCTC 3887 / NRRL 1 / QM 1276 / 107).